We begin with the raw amino-acid sequence, 520 residues long: Na(+)/H(+) antiporter NhaB (520 aa).

12 consecutive transmembrane segments (helical) span residues 27–49 (GFLI…LLVI), 62–82 (YPLL…MTSA), 97–117 (LLLI…LLIF), 120–140 (LLLG…AAAF), 144–164 (FLDA…FYGI), 202–222 (LMMH…VGEP), 238–258 (FLLR…VTCI), 303–323 (GLIG…VGLI), 348–368 (TEAL…AVII), 391–411 (LFYL…VGTV), 447–467 (ATPN…APLI), and 475–495 (VWMA…CVQF).

This sequence belongs to the NhaB Na(+)/H(+) (TC 2.A.34) antiporter family.

Its subcellular location is the cell inner membrane. The catalysed reaction is 2 Na(+)(in) + 3 H(+)(out) = 2 Na(+)(out) + 3 H(+)(in). Na(+)/H(+) antiporter that extrudes sodium in exchange for external protons. The protein is Na(+)/H(+) antiporter NhaB of Cronobacter sakazakii (strain ATCC BAA-894) (Enterobacter sakazakii).